A 419-amino-acid polypeptide reads, in one-letter code: E3 ubiquitin-protein ligase pellino homolog 2 (419 aa).

The FHA; atypical domain occupies 15 to 202; it reads EPVKYRELVV…HPQGGFTEES (188 aa).

It belongs to the pellino family. In terms of assembly, interacts with TRAF6, IRAK4 and MAP3K7. Interacts with IRAK1. Interacts with BCL10; this interaction is impaired by SOCS3. In terms of processing, phosphorylated by IRAK1 and IRAK4 enhancing its E3 ligase activity. Widely expressed both in embryos and adult. Weakly or not expressed in spleen and thymus.

It carries out the reaction S-ubiquitinyl-[E2 ubiquitin-conjugating enzyme]-L-cysteine + [acceptor protein]-L-lysine = [E2 ubiquitin-conjugating enzyme]-L-cysteine + N(6)-ubiquitinyl-[acceptor protein]-L-lysine.. Its pathway is protein modification; protein ubiquitination. Functionally, E3 ubiquitin ligase catalyzing the covalent attachment of ubiquitin moieties onto substrate proteins. Involved in the TLR and IL-1 signaling pathways via interaction with the complex containing IRAK kinases and TRAF6. Mediates IL1B-induced IRAK1 'Lys-63'-linked polyubiquitination and possibly 'Lys-48'-linked ubiquitination. May be important for LPS- and IL1B-induced MAP3K7-dependent, but not MAP3K3-dependent, NF-kappa-B activation. Can activate the MAP (mitogen activated protein) kinase pathway leading to activation of ELK1. The sequence is that of E3 ubiquitin-protein ligase pellino homolog 2 (Peli2) from Mus musculus (Mouse).